The following is a 181-amino-acid chain: Large ribosomal subunit protein uL5 (181 aa).

It belongs to the universal ribosomal protein uL5 family. Part of the 50S ribosomal subunit; part of the 5S rRNA/L5/L18/L25 subcomplex. Contacts the 5S rRNA and the P site tRNA. Forms a bridge to the 30S subunit in the 70S ribosome.

Functionally, this is one of the proteins that bind and probably mediate the attachment of the 5S RNA into the large ribosomal subunit, where it forms part of the central protuberance. In the 70S ribosome it contacts protein S13 of the 30S subunit (bridge B1b), connecting the 2 subunits; this bridge is implicated in subunit movement. Contacts the P site tRNA; the 5S rRNA and some of its associated proteins might help stabilize positioning of ribosome-bound tRNAs. This is Large ribosomal subunit protein uL5 from Mycoplasmopsis pulmonis (strain UAB CTIP) (Mycoplasma pulmonis).